A 109-amino-acid polypeptide reads, in one-letter code: Tyrosine-protein phosphatase 6 (109 aa).

Residues 1–109 (YNINVIVMVC…SEDETTPLCV (109 aa)) enclose the Tyrosine-protein phosphatase domain. Residue aspartate 76 participates in substrate binding.

The protein belongs to the protein-tyrosine phosphatase family.

It catalyses the reaction O-phospho-L-tyrosyl-[protein] + H2O = L-tyrosyl-[protein] + phosphate. The sequence is that of Tyrosine-protein phosphatase 6 (STY-6) from Styela plicata (Wrinkled sea squirt).